A 284-amino-acid polypeptide reads, in one-letter code: Acetylglutamate kinase (284 aa).

Substrate is bound by residues 54–55 (GG), Arg-76, and Asn-179.

The protein belongs to the acetylglutamate kinase family. ArgB subfamily.

The protein localises to the cytoplasm. It catalyses the reaction N-acetyl-L-glutamate + ATP = N-acetyl-L-glutamyl 5-phosphate + ADP. Its pathway is amino-acid biosynthesis; L-arginine biosynthesis; N(2)-acetyl-L-ornithine from L-glutamate: step 2/4. In terms of biological role, catalyzes the ATP-dependent phosphorylation of N-acetyl-L-glutamate. This Sorangium cellulosum (strain So ce56) (Polyangium cellulosum (strain So ce56)) protein is Acetylglutamate kinase.